The chain runs to 546 residues: Aladin (546 aa).

Cys2 carries the N-acetylcysteine modification. Phosphoserine is present on Ser33. 7 WD repeats span residues 142 to 180 (EFAQ…VYNA), 183 to 222 (TIVP…IWTL), 234 to 274 (GCAQ…VWDV), 280 to 316 (VPLP…VWEA), 324 to 380 (WPTL…IVAD), 386 to 433 (IQTP…LFRT), and 442 to 482 (LPCG…IAHI). 4 positions are modified to phosphoserine: Ser495, Ser511, Ser522, and Ser525. A disordered region spans residues 500 to 546 (RAQEPPAGGGGSIHDLPLFTETSPTSAPWDPLPGPPPVLPHSPHSHL). Positions 529–539 (DPLPGPPPVLP) are enriched in pro residues. A Phosphoserine modification is found at Ser541. The Microbody targeting signal motif lies at 544-546 (SHL).

In terms of assembly, interacts with NDC1, the interaction is required for nuclear pore localization. Interacts with the inactive form aurora kinase AURKA. Interacts with PGRMC2. Widely expressed. Particularly abundant in cerebellum, corpus callosum, adrenal gland, pituitary gland, gastrointestinal structures and fetal lung.

It is found in the nucleus. The protein localises to the nuclear pore complex. The protein resides in the cytoplasm. Its subcellular location is the cytoskeleton. It localises to the spindle pole. It is found in the nucleus envelope. Functionally, plays a role in the normal development of the peripheral and central nervous system. Required for the correct localization of aurora kinase AURKA and the microtubule minus end-binding protein NUMA1 as well as a subset of AURKA targets which ensures proper spindle formation and timely chromosome alignment. The sequence is that of Aladin (AAAS) from Homo sapiens (Human).